Reading from the N-terminus, the 86-residue chain is Small ribosomal subunit protein bS20 (86 aa).

The disordered stretch occupies residues 1–26 (MANIKSAKKRAITSEKRRQHNASRRS).

The protein belongs to the bacterial ribosomal protein bS20 family.

In terms of biological role, binds directly to 16S ribosomal RNA. The polypeptide is Small ribosomal subunit protein bS20 (Photobacterium profundum (strain SS9)).